Here is a 399-residue protein sequence, read N- to C-terminus: uncharacterized protein (399 aa).

The next 5 helical transmembrane spans lie at 26–46 (LLTIIGIVIGVLAMVSLISLG), 266–286 (VITIFVVGVAAISLLVGAVGI), 301–321 (IGILKALGAETTDILAIFVVE), 324–344 (FLGLFGGIVGLVLGILLAEVI), and 358–378 (AWISWELIVGVLIFSFLVGVI).

This sequence belongs to the ABC-4 integral membrane protein family.

It is found in the cell membrane. This is an uncharacterized protein from Methanocaldococcus jannaschii (strain ATCC 43067 / DSM 2661 / JAL-1 / JCM 10045 / NBRC 100440) (Methanococcus jannaschii).